The following is a 349-amino-acid chain: Protein RecA (349 aa).

64-71 is a binding site for ATP; it reads GPESSGKT. A disordered region spans residues 328-349; the sequence is NGEIEVEAPSEEEFEDLPLDLK. Residues 331–349 are compositionally biased toward acidic residues; that stretch reads IEVEAPSEEEFEDLPLDLK.

It belongs to the RecA family.

It localises to the cytoplasm. Can catalyze the hydrolysis of ATP in the presence of single-stranded DNA, the ATP-dependent uptake of single-stranded DNA by duplex DNA, and the ATP-dependent hybridization of homologous single-stranded DNAs. It interacts with LexA causing its activation and leading to its autocatalytic cleavage. In Halalkalibacterium halodurans (strain ATCC BAA-125 / DSM 18197 / FERM 7344 / JCM 9153 / C-125) (Bacillus halodurans), this protein is Protein RecA.